Reading from the N-terminus, the 1431-residue chain is DNA polymerase II large subunit (1431 aa).

The disordered stretch occupies residues 1388–1431; sequence LLENFANGYNKGKKEEMPKKQRKKEQEKSKKRKVISLDDFFSRK. Positions 1399–1415 are enriched in basic and acidic residues; it reads GKKEEMPKKQRKKEQEK.

This sequence belongs to the archaeal DNA polymerase II family. In terms of assembly, heterodimer of a large subunit and a small subunit. Post-translationally, this protein undergoes a protein self splicing that involves a post-translational excision of the intervening region (intein) followed by peptide ligation.

The catalysed reaction is DNA(n) + a 2'-deoxyribonucleoside 5'-triphosphate = DNA(n+1) + diphosphate. It carries out the reaction Exonucleolytic cleavage in the 3'- to 5'-direction to yield nucleoside 5'-phosphates.. Its function is as follows. Possesses two activities: a DNA synthesis (polymerase) and an exonucleolytic activity that degrades single-stranded DNA in the 3'- to 5'-direction. Has a template-primer preference which is characteristic of a replicative DNA polymerase. The polypeptide is DNA polymerase II large subunit (polC) (Pyrococcus horikoshii (strain ATCC 700860 / DSM 12428 / JCM 9974 / NBRC 100139 / OT-3)).